The primary structure comprises 253 residues: MLKTRLIPCLDVADGRVVKGVNFVGLRDAGDPVEAARAYDAAGADEICFLDIHATHENRGTMFDMVRRTAEQCFVPLTVGGGVRTKDDVRALLLAGADKVSFNSAAVANPDVIAEAADQFGSQCIVCAIDAKSVAPGKWEIFTHGGRRETGIDAVEFARLVTAKGAGEILLTSMDRDGTKSGFNLEMTRAISDAVNVPVIASGGVGTLDHLVDGVTKGGASAVLAASIFHFGEYTVQEAKEHMIANGIPMRLQ.

Active-site residues include D11 and D130.

Belongs to the HisA/HisF family. Heterodimer of HisH and HisF.

It localises to the cytoplasm. It catalyses the reaction 5-[(5-phospho-1-deoxy-D-ribulos-1-ylimino)methylamino]-1-(5-phospho-beta-D-ribosyl)imidazole-4-carboxamide + L-glutamine = D-erythro-1-(imidazol-4-yl)glycerol 3-phosphate + 5-amino-1-(5-phospho-beta-D-ribosyl)imidazole-4-carboxamide + L-glutamate + H(+). It participates in amino-acid biosynthesis; L-histidine biosynthesis; L-histidine from 5-phospho-alpha-D-ribose 1-diphosphate: step 5/9. IGPS catalyzes the conversion of PRFAR and glutamine to IGP, AICAR and glutamate. The HisF subunit catalyzes the cyclization activity that produces IGP and AICAR from PRFAR using the ammonia provided by the HisH subunit. The protein is Imidazole glycerol phosphate synthase subunit HisF of Ruegeria sp. (strain TM1040) (Silicibacter sp.).